A 127-amino-acid polypeptide reads, in one-letter code: Protein YwpG (127 aa).

Interacts with both the D1 and D2 domains of dynamin-like protein DynA.

It is found in the cell membrane. The protein is Protein YwpG (ywpG) of Bacillus subtilis (strain 168).